A 61-amino-acid chain; its full sequence is MSFLKKSLFLVLFLGFVSFSICEEEKREDEEEENEREENKESEEKRNQEERPPGFTPFRVD.

Residues Met1–Cys22 form the signal peptide. A propeptide spanning residues Glu23–Glu50 is cleaved from the precursor. Positions Glu24 to Asp61 are disordered. Positions Lys26–Arg36 are enriched in acidic residues. Over residues Glu37–Pro52 the composition is skewed to basic and acidic residues. Residue Pro53 is modified to 4-hydroxyproline; in form [Hyp3,Thr6]-bradykinyl-Val,Asp and [Hyp3,Thr6]-bradykinin.

Belongs to the frog skin active peptide (FSAP) family. Bradykinin-related peptide subfamily. Expressed by the skin glands.

It is found in the secreted. Its function is as follows. Induces relaxation of rat smooth muscle from tail artery (EC(50)=16.8 nM) and contraction of that from ileum (EC(50)=205 nM), urinary bladder (EC(50)=895 nM) and uterus (EC(50)=60.3 nM). Binds to both bradykinin receptor B1 (BDKRB1) and B2 (BDKRB2). In terms of biological role, [Hyp3,Thr6]-bradykinin: Induces relaxation of rat smooth muscle from tail artery (EC(50)=56.7 nM) and contraction of that from ileum (EC(50)=588 nM), urinary bladder (EC(50)=4.6 uM) and uterus (EC(50)=3.9 nM). Binds to both bradykinin receptor B1 (BDKRB1) and B2 (BDKRB2). In arterial smooth muscle, the effect via BDKRB1 is stronger, in uterus, ileum and urinary bladder the effect via BDKRB2. Induces relaxation of rat smooth muscle from tail artery (EC(50)=10.8 nM) and contraction of that from ileum (EC(50)=645 nM), urinary bladder (EC(50)=1.1 uM) and uterus (EC(50)=1.2 uM). Binds to both bradykinin receptor B1 (BDKRB1) and B2 (BDKRB2). Apart from uterus smooth muscle, the effect via BDKRB2 is stronger. Functionally, [Hyp3,Thr6]-bradykinyl-Val,Asp: Induces relaxation of rat smooth muscle from tail artery (EC(50)=3.5 nM) and contraction of that from ileum (EC(50)=223 nM), urinary bladder (EC(50)=1.5 uM) and uterus (EC(50)=356 nM). Binds to both bradykinin receptor B1 (BDKRB1) and B2 (BDKRB2); the effects via BDKRB2 are stronger. The protein is [Thr6]-bradykinyl-Val,Asp of Agalychnis dacnicolor (Giant Mexican leaf frog).